The primary structure comprises 254 residues: Ribosomal RNA small subunit methyltransferase G (254 aa).

Residues Gly92, 143–144 (AE), and Arg156 contribute to the S-adenosyl-L-methionine site.

Belongs to the methyltransferase superfamily. RNA methyltransferase RsmG family.

The protein localises to the cytoplasm. In terms of biological role, specifically methylates the N7 position of a guanine in 16S rRNA. The protein is Ribosomal RNA small subunit methyltransferase G of Leptospira interrogans serogroup Icterohaemorrhagiae serovar copenhageni (strain Fiocruz L1-130).